We begin with the raw amino-acid sequence, 431 residues long: Trigger factor (431 aa).

The PPIase FKBP-type domain maps to 158–243 (GDLVAVETWS…VAEVSEPVVP (86 aa)).

The protein belongs to the FKBP-type PPIase family. Tig subfamily.

It localises to the cytoplasm. It carries out the reaction [protein]-peptidylproline (omega=180) = [protein]-peptidylproline (omega=0). In terms of biological role, involved in protein export. Acts as a chaperone by maintaining the newly synthesized protein in an open conformation. Functions as a peptidyl-prolyl cis-trans isomerase. This chain is Trigger factor, found in Stenotrophomonas maltophilia (strain K279a).